The primary structure comprises 443 residues: Tol-Pal system protein TolB (443 aa).

The signal sequence occupies residues 1–33; that stretch reads MKIGIINTKIRTVFSAFACMIAASLVCTMPARA.

It belongs to the TolB family. The Tol-Pal system is composed of five core proteins: the inner membrane proteins TolA, TolQ and TolR, the periplasmic protein TolB and the outer membrane protein Pal. They form a network linking the inner and outer membranes and the peptidoglycan layer.

It localises to the periplasm. In terms of biological role, part of the Tol-Pal system, which plays a role in outer membrane invagination during cell division and is important for maintaining outer membrane integrity. This Brucella abortus (strain S19) protein is Tol-Pal system protein TolB.